The chain runs to 529 residues: Bifunctional purine biosynthesis protein PurH (529 aa).

Residues 1-148 (MQQRRPVRRA…KNHKDVAIVV (148 aa)) enclose the MGS-like domain. Lys-287 is modified (N6-acetyllysine).

This sequence belongs to the PurH family.

The enzyme catalyses (6R)-10-formyltetrahydrofolate + 5-amino-1-(5-phospho-beta-D-ribosyl)imidazole-4-carboxamide = 5-formamido-1-(5-phospho-D-ribosyl)imidazole-4-carboxamide + (6S)-5,6,7,8-tetrahydrofolate. The catalysed reaction is IMP + H2O = 5-formamido-1-(5-phospho-D-ribosyl)imidazole-4-carboxamide. Its pathway is purine metabolism; IMP biosynthesis via de novo pathway; 5-formamido-1-(5-phospho-D-ribosyl)imidazole-4-carboxamide from 5-amino-1-(5-phospho-D-ribosyl)imidazole-4-carboxamide (10-formyl THF route): step 1/1. It participates in purine metabolism; IMP biosynthesis via de novo pathway; IMP from 5-formamido-1-(5-phospho-D-ribosyl)imidazole-4-carboxamide: step 1/1. This chain is Bifunctional purine biosynthesis protein PurH, found in Escherichia coli O9:H4 (strain HS).